We begin with the raw amino-acid sequence, 81 residues long: MTYFVFFLGICFVVGVLGVASNPSPYYGVVGLVLASVAGCGWLLSLGVSFVALVLFMVYFGGMLVVFVYSVALAAEPFPEA.

3 helical membrane passes run 1–21 (MTYF…GVAS), 27–47 (YGVV…LSLG), and 48–68 (VSFV…VVFV).

It belongs to the complex I subunit 6 family.

Its subcellular location is the mitochondrion membrane. It carries out the reaction a ubiquinone + NADH + 5 H(+)(in) = a ubiquinol + NAD(+) + 4 H(+)(out). In terms of biological role, core subunit of the mitochondrial membrane respiratory chain NADH dehydrogenase (Complex I) that is believed to belong to the minimal assembly required for catalysis. Complex I functions in the transfer of electrons from NADH to the respiratory chain. The immediate electron acceptor for the enzyme is believed to be ubiquinone. This chain is NADH-ubiquinone oxidoreductase chain 6 (MT-ND6), found in Anas platyrhynchos (Mallard).